Here is a 136-residue protein sequence, read N- to C-terminus: ATP synthase epsilon chain, chloroplastic (136 aa).

This sequence belongs to the ATPase epsilon chain family. As to quaternary structure, F-type ATPases have 2 components, CF(1) - the catalytic core - and CF(0) - the membrane proton channel. CF(1) has five subunits: alpha(3), beta(3), gamma(1), delta(1), epsilon(1). CF(0) has three main subunits: a, b and c.

It localises to the plastid. It is found in the chloroplast thylakoid membrane. Functionally, produces ATP from ADP in the presence of a proton gradient across the membrane. This Cucumis sativus (Cucumber) protein is ATP synthase epsilon chain, chloroplastic.